A 125-amino-acid chain; its full sequence is Fluoride-specific ion channel FluC (125 aa).

4 consecutive transmembrane segments (helical) span residues 9–29, 32–52, 67–87, and 99–119; these read LFCA…YGLL, AFPY…GLIM, IGLT…SYET, and AFTN…LGII. Residues Gly-75 and Thr-78 each coordinate Na(+).

Belongs to the fluoride channel Fluc/FEX (TC 1.A.43) family.

Its subcellular location is the cell inner membrane. It catalyses the reaction fluoride(in) = fluoride(out). Na(+) is not transported, but it plays an essential structural role and its presence is essential for fluoride channel function. In terms of biological role, fluoride-specific ion channel. Important for reducing fluoride concentration in the cell, thus reducing its toxicity. In Trichlorobacter lovleyi (strain ATCC BAA-1151 / DSM 17278 / SZ) (Geobacter lovleyi), this protein is Fluoride-specific ion channel FluC.